The chain runs to 692 residues: Elongation factor G (692 aa).

In terms of domain architecture, tr-type G spans 8 to 282 (ENTRNIGIMA…AVIDYLPSPL (275 aa)). GTP-binding positions include 17–24 (AHIDAGKT), 81–85 (DTPGH), and 135–138 (NKMD).

The protein belongs to the TRAFAC class translation factor GTPase superfamily. Classic translation factor GTPase family. EF-G/EF-2 subfamily.

The protein localises to the cytoplasm. Its function is as follows. Catalyzes the GTP-dependent ribosomal translocation step during translation elongation. During this step, the ribosome changes from the pre-translocational (PRE) to the post-translocational (POST) state as the newly formed A-site-bound peptidyl-tRNA and P-site-bound deacylated tRNA move to the P and E sites, respectively. Catalyzes the coordinated movement of the two tRNA molecules, the mRNA and conformational changes in the ribosome. The sequence is that of Elongation factor G from Bacillus thuringiensis subsp. konkukian (strain 97-27).